A 353-amino-acid chain; its full sequence is Uroporphyrinogen decarboxylase (353 aa).

Substrate contacts are provided by residues 30 to 34, Asp79, Tyr154, Ser209, and His332; that span reads RQAGR.

Belongs to the uroporphyrinogen decarboxylase family. Homodimer.

It localises to the cytoplasm. The catalysed reaction is uroporphyrinogen III + 4 H(+) = coproporphyrinogen III + 4 CO2. Its pathway is porphyrin-containing compound metabolism; protoporphyrin-IX biosynthesis; coproporphyrinogen-III from 5-aminolevulinate: step 4/4. Functionally, catalyzes the decarboxylation of four acetate groups of uroporphyrinogen-III to yield coproporphyrinogen-III. The sequence is that of Uroporphyrinogen decarboxylase from Mycobacterium ulcerans (strain Agy99).